A 214-amino-acid chain; its full sequence is RNA-binding protein 38 (214 aa).

Residues 11–88 enclose the RRM domain; it reads TKIFVGGLPY…RKANVNLAYL (78 aa).

It belongs to the RBM38 family. In terms of tissue distribution, strongly expressed in the nervous system. Expressed at early neurula stages of development.

The protein localises to the cytoplasm. It localises to the cytosol. The protein resides in the nucleus. Functionally, RNA-binding protein that specifically bind the 3'-UTR of VegT transcripts, leading to maintain their stability and stimulate their translation, thereby playing a role in germ layer formation. VegT is a localized maternal determinant essentially required for endoderm formation. Also has some proneural function in the open neural plate and in the context of retinogenesis. May also act as a mRNA splicing factor. May play a role in myogenic differentiation. This Xenopus laevis (African clawed frog) protein is RNA-binding protein 38 (rbm38).